A 152-amino-acid chain; its full sequence is Glutaredoxin-related protein 5, mitochondrial (152 aa).

Residues 1–31 (MSASLSRAAAALLRWGRSAGGGGLPGAGVRA) constitute a mitochondrion transit peptide. The Glutaredoxin domain maps to 38 to 141 (AEQLDALVKK…EELKKLGIRS (104 aa)). Residue K55 coordinates glutathione. K55 carries the post-translational modification N6-succinyllysine. A [2Fe-2S] cluster-binding site is contributed by C63. Residues 93-97 (RQGIK), I105, and 118-119 (CD) each bind glutathione. S151 is modified (phosphoserine).

It belongs to the glutaredoxin family. Monothiol subfamily. As to quaternary structure, homodimer. Interacts with ISCU. Interacts with BOLA1. As to expression, detected in bone, liver, muscle and kidney.

The protein resides in the mitochondrion matrix. Monothiol glutaredoxin involved in mitochondrial iron-sulfur (Fe/S) cluster transfer. Receives 2Fe/2S clusters from scaffold protein ISCU and mediates their transfer to apoproteins, to the 4Fe/FS cluster biosynthesis machinery, or export from mitochondrion. Required for normal regulation of hemoglobin synthesis by the iron-sulfur protein ACO1. The polypeptide is Glutaredoxin-related protein 5, mitochondrial (Glrx5) (Mus musculus (Mouse)).